We begin with the raw amino-acid sequence, 458 residues long: Argininosuccinate lyase (458 aa).

Belongs to the lyase 1 family. Argininosuccinate lyase subfamily.

It is found in the cytoplasm. It catalyses the reaction 2-(N(omega)-L-arginino)succinate = fumarate + L-arginine. It functions in the pathway amino-acid biosynthesis; L-arginine biosynthesis; L-arginine from L-ornithine and carbamoyl phosphate: step 3/3. This chain is Argininosuccinate lyase, found in Salmonella newport (strain SL254).